Consider the following 232-residue polypeptide: 26.5 kDa heat shock protein, mitochondrial (232 aa).

The N-terminal 42 residues, 1–42, are a transit peptide targeting the mitochondrion; sequence MALARLALRNLQQKLSPSLMGQSCERGLVGNRHNPMKLNRFM. Residues 44-82 are disordered; that stretch reads TSAGEQEDKMNTEVSVSEKKSPRQNFPRRRGRKSLWRNT. A compositionally biased stretch (basic and acidic residues) spans 49-64; the sequence is QEDKMNTEVSVSEKKS. A compositionally biased stretch (basic residues) spans 69 to 78; the sequence is FPRRRGRKSL. In terms of domain architecture, sHSP spans 114 to 232; it reads IFDNFNVNPF…KKNVQEISVE (119 aa).

This sequence belongs to the small heat shock protein (HSP20) family. As to quaternary structure, may form oligomeric structures.

The protein resides in the mitochondrion. This is 26.5 kDa heat shock protein, mitochondrial (HSP26.5) from Arabidopsis thaliana (Mouse-ear cress).